The primary structure comprises 441 residues: Glutamyl-tRNA reductase (441 aa).

Residues 49-52 (TCNR), S109, 114-116 (EGQ), and Q120 contribute to the substrate site. C50 (nucleophile) is an active-site residue. 198–203 (GAGRMS) serves as a coordination point for NADP(+).

The protein belongs to the glutamyl-tRNA reductase family. As to quaternary structure, homodimer.

It carries out the reaction (S)-4-amino-5-oxopentanoate + tRNA(Glu) + NADP(+) = L-glutamyl-tRNA(Glu) + NADPH + H(+). It participates in porphyrin-containing compound metabolism; protoporphyrin-IX biosynthesis; 5-aminolevulinate from L-glutamyl-tRNA(Glu): step 1/2. Its pathway is porphyrin-containing compound metabolism; chlorophyll biosynthesis. In terms of biological role, catalyzes the NADPH-dependent reduction of glutamyl-tRNA(Glu) to glutamate 1-semialdehyde (GSA). The chain is Glutamyl-tRNA reductase from Prochlorococcus marinus (strain NATL2A).